A 137-amino-acid polypeptide reads, in one-letter code: Large ribosomal subunit protein uL16 (137 aa).

Residues 1–14 (MLQPNRRKFRKEHK) show a composition bias toward basic residues. Residues 1–22 (MLQPNRRKFRKEHKGRNEGLAT) are disordered.

The protein belongs to the universal ribosomal protein uL16 family. Part of the 50S ribosomal subunit.

In terms of biological role, binds 23S rRNA and is also seen to make contacts with the A and possibly P site tRNAs. This is Large ribosomal subunit protein uL16 from Dechloromonas aromatica (strain RCB).